Here is a 458-residue protein sequence, read N- to C-terminus: tRNA modification GTPase MnmE (458 aa).

Residues Arg-32, Glu-89, and Lys-128 each coordinate (6S)-5-formyl-5,6,7,8-tetrahydrofolate. One can recognise a TrmE-type G domain in the interval 224 to 381 (GVRVVLAGRP…LCQRLKECAG (158 aa)). Asn-234 serves as a coordination point for K(+). Residues 234–239 (NVGKSS), 253–259 (TDVPGTT), and 278–281 (DTAG) contribute to the GTP site. Residue Ser-238 participates in Mg(2+) binding. Thr-253, Val-255, and Thr-258 together coordinate K(+). Position 259 (Thr-259) interacts with Mg(2+). A (6S)-5-formyl-5,6,7,8-tetrahydrofolate-binding site is contributed by Lys-458.

The protein belongs to the TRAFAC class TrmE-Era-EngA-EngB-Septin-like GTPase superfamily. TrmE GTPase family. In terms of assembly, homodimer. Heterotetramer of two MnmE and two MnmG subunits. K(+) is required as a cofactor.

It is found in the cytoplasm. Exhibits a very high intrinsic GTPase hydrolysis rate. Involved in the addition of a carboxymethylaminomethyl (cmnm) group at the wobble position (U34) of certain tRNAs, forming tRNA-cmnm(5)s(2)U34. This is tRNA modification GTPase MnmE from Nitrosococcus oceani (strain ATCC 19707 / BCRC 17464 / JCM 30415 / NCIMB 11848 / C-107).